The chain runs to 470 residues: 6-phospho-beta-galactosidase (470 aa).

Positions 19, 116, 159, 160, and 297 each coordinate D-galactose 6-phosphate. Catalysis depends on E160, which acts as the Proton donor. E375 functions as the Nucleophile in the catalytic mechanism. 4 residues coordinate D-galactose 6-phosphate: S430, W431, K437, and Y439.

This sequence belongs to the glycosyl hydrolase 1 family.

The catalysed reaction is a 6-phospho-beta-D-galactoside + H2O = D-galactose 6-phosphate + an alcohol. Its pathway is carbohydrate metabolism; lactose degradation; D-galactose 6-phosphate and beta-D-glucose from lactose 6-phosphate: step 1/1. The sequence is that of 6-phospho-beta-galactosidase from Staphylococcus aureus (strain COL).